Here is a 1164-residue protein sequence, read N- to C-terminus: Receptor-like protein kinase BRI1-like 3 (1164 aa).

The signal sequence occupies residues 1–23 (MKQQWQFLILCLLVLFLTVDSRG). The Extracellular segment spans residues 24 to 772 (RRLLSDDVND…RSHAHPKKQS (749 aa)). The N-linked (GlcNAc...) asparagine glycan is linked to asparagine 32. The Cys pair 1 motif lies at 65–72 (CTWRGVSC). LRR repeat units lie at residues 77-98 (RVIG…NNLT), 102-123 (NLRS…SSSG), 125-146 (SLEV…DYVF), 151-173 (NLVS…PSAS), 176-197 (RITT…TFIA), 202-224 (SLKH…SFGL), 227-248 (NLTV…VSLS), 252-274 (LLET…DYWG), 278-300 (NLRQ…LSLL), 303-325 (TLEV…FTSC), 327-347 (SLQS…STVV), 352-375 (RITN…TNCS), 376-397 (NLRV…GFCS), 403-424 (VLEK…ELGK), 427-448 (SLKT…EIWT), 451-473 (KLSD…ICVD), 476-498 (NLET…ISKC), 500-523 (NMLW…GKLE), 524-546 (KLAI…LGNC), and 548-570 (NLIW…LASQ). Asparagine 96 and asparagine 112 each carry an N-linked (GlcNAc...) asparagine glycan. An N-linked (GlcNAc...) asparagine glycan is attached at asparagine 156. N-linked (GlcNAc...) asparagine glycans are attached at residues asparagine 212, asparagine 227, and asparagine 257. Asparagine 362 and asparagine 373 each carry an N-linked (GlcNAc...) asparagine glycan. An N-linked (GlcNAc...) asparagine glycan is attached at asparagine 461. Asparagine 532, asparagine 558, and asparagine 638 each carry an N-linked (GlcNAc...) asparagine glycan. 4 LRR repeats span residues 640 to 662 (SMIY…YGAM), 664 to 686 (YLQV…FGGL), 688 to 711 (AIGV…GGLS), and 712 to 734 (FLSD…GQLT). Residues asparagine 722 and asparagine 743 are each glycosylated (N-linked (GlcNAc...) asparagine). The Cys pair 2 signature appears at 748–755 (CGVPLPPC). The helical transmembrane segment at 773 to 793 (IATGMSAGIVFSFMCIVMLIM) threads the bilayer. Residues 794 to 1164 (ALYRARKVQK…LVEESRDKEP (371 aa)) lie on the Cytoplasmic side of the membrane. A phosphothreonine mark is found at threonine 847 and threonine 855. The 279-residue stretch at 858 to 1136 (FSADSMIGSG…QVMTMFKELV (279 aa)) folds into the Protein kinase domain. Residues 864–872 (IGSGGFGDV) and lysine 886 contribute to the ATP site. Position 931 is a phosphotyrosine (tyrosine 931). Catalysis depends on aspartate 985, which acts as the Proton acceptor. Residue serine 1020 is modified to Phosphoserine. The residue at position 1028 (tyrosine 1028) is a Phosphotyrosine.

The protein belongs to the protein kinase superfamily. Ser/Thr protein kinase family. Autophosphorylated on Tyr and Thr residues. As to expression, predominantly expressed in vascular tissues. Expressed only during postembryonic development with a very discrete pattern of expression, preferentially in the two protophloem cell files at the elongation zone of the root. The expression in these two cell files attenuates as the phloem cells differentiate in the upper root. In cotyledons and leaves, it is expressed in phloem cells, starting at the cotyledons and shoot apex, moving toward the basal part of the leaves, where the expression is weak. Expressed in the secondary and tertiary veins and in the upper part of the cotyledons and leaves. Weakly or not expressed in the inflorescence stems. Has some complementary expression with BRL1.

It localises to the cell membrane. The enzyme catalyses L-seryl-[protein] + ATP = O-phospho-L-seryl-[protein] + ADP + H(+). It carries out the reaction L-threonyl-[protein] + ATP = O-phospho-L-threonyl-[protein] + ADP + H(+). It catalyses the reaction L-tyrosyl-[protein] + ATP = O-phospho-L-tyrosyl-[protein] + ADP + H(+). Its function is as follows. Receptor with a dual specificity kinase activity acting on both serine/threonine- and tyrosine-containing substrates. Binds brassinolide. Regulates, in response to brassinosteroid binding, a signaling cascade involved in plant development. May be involved in cell growth and vascular differentiation. The polypeptide is Receptor-like protein kinase BRI1-like 3 (BRL3) (Arabidopsis thaliana (Mouse-ear cress)).